The following is a 944-amino-acid chain: UvrABC system protein A (944 aa).

33–40 (GLSGSGKS) is an ATP binding site. Residues 252–279 (CPICGFSIGELEPRMFSFNSPFGACPTC) form a C4-type zinc finger. ABC transporter domains lie at 309-587 (WEPT…KKSL) and 607-935 (ITDR…QYLK). 639-646 (GVSGSGKS) is an ATP binding site. Residues 738–764 (CEACKGDGIIKIEMHFLPDVYVPCEVC) form a C4-type zinc finger.

This sequence belongs to the ABC transporter superfamily. UvrA family. Forms a heterotetramer with UvrB during the search for lesions.

The protein localises to the cytoplasm. Its function is as follows. The UvrABC repair system catalyzes the recognition and processing of DNA lesions. UvrA is an ATPase and a DNA-binding protein. A damage recognition complex composed of 2 UvrA and 2 UvrB subunits scans DNA for abnormalities. When the presence of a lesion has been verified by UvrB, the UvrA molecules dissociate. The protein is UvrABC system protein A of Staphylococcus epidermidis (strain ATCC 35984 / DSM 28319 / BCRC 17069 / CCUG 31568 / BM 3577 / RP62A).